The chain runs to 574 residues: Ankyrin repeat protein B18 (574 aa).

6 ANK repeats span residues 56-87, 135-164, 167-213, 217-249, 253-285, and 327-356; these read TGYT…NVTM, IKSR…DPNF, DGYT…NLNA, CGNT…NFKI, HGLT…NVGE, and EGKT…DINA. Residues 541-574 enclose the F-box domain; the sequence is NCLLTLLPSEIIYEILYMLTINDLYNISYPPTKV.

This chain is Ankyrin repeat protein B18, found in Homo sapiens (Human).